A 386-amino-acid polypeptide reads, in one-letter code: 26S proteasome non-ATPase regulatory subunit 13 homolog B (386 aa).

The residue at position 2 (A2) is an N-acetylalanine. The PCI domain maps to 174 to 347 (FSEFYKNALL…GTVYVSWAQP (174 aa)).

This sequence belongs to the proteasome subunit S11 family. In terms of assembly, component of the 19S regulatory particle (RP/PA700) lid subcomplex of the 26S proteasome. The 26S proteasome is composed of a core protease (CP), known as the 20S proteasome, capped at one or both ends by the 19S regulatory particle (RP/PA700). The RP/PA700 complex is composed of at least 17 different subunits in two subcomplexes, the base and the lid, which form the portions proximal and distal to the 20S proteolytic core, respectively. Ubiquitous with highest expression in flowers.

Acts as a regulatory subunit of the 26S proteasome which is involved in the ATP-dependent degradation of ubiquitinated proteins. The protein is 26S proteasome non-ATPase regulatory subunit 13 homolog B (RPN9B) of Arabidopsis thaliana (Mouse-ear cress).